Reading from the N-terminus, the 433-residue chain is Peptidoglycan glycosyltransferase RodA (433 aa).

12 helical membrane-spanning segments follow: residues F9 to Y29, Y44 to Y64, T74 to V94, W100 to L120, L158 to P178, L181 to W201, L221 to L241, Y249 to V269, W295 to L315, W341 to L361, G378 to M398, and I400 to I420.

This sequence belongs to the SEDS family. MrdB/RodA subfamily.

It localises to the cell inner membrane. The enzyme catalyses [GlcNAc-(1-&gt;4)-Mur2Ac(oyl-L-Ala-gamma-D-Glu-L-Lys-D-Ala-D-Ala)](n)-di-trans,octa-cis-undecaprenyl diphosphate + beta-D-GlcNAc-(1-&gt;4)-Mur2Ac(oyl-L-Ala-gamma-D-Glu-L-Lys-D-Ala-D-Ala)-di-trans,octa-cis-undecaprenyl diphosphate = [GlcNAc-(1-&gt;4)-Mur2Ac(oyl-L-Ala-gamma-D-Glu-L-Lys-D-Ala-D-Ala)](n+1)-di-trans,octa-cis-undecaprenyl diphosphate + di-trans,octa-cis-undecaprenyl diphosphate + H(+). It participates in cell wall biogenesis; peptidoglycan biosynthesis. In terms of biological role, peptidoglycan polymerase that is essential for cell wall elongation. This is Peptidoglycan glycosyltransferase RodA from Treponema pallidum (strain Nichols).